The chain runs to 90 residues: uncharacterized protein (90 aa).

2 consecutive transmembrane segments (helical) span residues 23–43 (ITTI…VGLF) and 48–68 (VTLL…IIGF).

The protein resides in the cell membrane. This is an uncharacterized protein from Rickettsia prowazekii (strain Madrid E).